The sequence spans 803 residues: 3',5'-cyclic-AMP phosphodiesterase 4D (803 aa).

The segment at 1–103 is disordered; sequence MEAEGSSVPA…SGASRVRHRG (103 aa). Phosphoserine is present on residues H52 and H56. Positions 58 to 85 are enriched in pro residues; that stretch reads PPPPPPSPQPQLQPPPPPPLPPPPPPPG. Phosphoserine occurs at positions 137, 294, 296, 343, and 370. A disordered region spans residues 338–358; that stretch reads EVEIPSPTQKEKEKKKRPMSQ. The PDEase domain occupies 381–710; that stretch reads VKTEQEDVLA…EWYQSTIPQS (330 aa). K382 is covalently cross-linked (Glycyl lysine isopeptide (Lys-Gly) (interchain with G-Cter in SUMO)). H457 serves as the catalytic Proton donor. H457 serves as a coordination point for 3',5'-cyclic AMP. An AMP-binding site is contributed by H457. Positions 461, 497, 498, and 615 each coordinate Zn(2+). AMP is bound by residues D498, D615, N618, Q666, and F669. D498 is a Mg(2+) binding site. A Mn(2+)-binding site is contributed by D498. The 3',5'-cyclic AMP site is built by Q666 and F669. Disordered stretches follow at residues 705 to 724 and 732 to 803; these read STIP…GRQG and ELTL…CPDT. A compositionally biased stretch (polar residues) spans 757-768; sequence CSDSKTLCTQDS. Residues 774-789 are compositionally biased toward acidic residues; sequence PLDEQVEEEAVAEEES.

This sequence belongs to the cyclic nucleotide phosphodiesterase family. PDE4 subfamily. In terms of assembly, homodimer for the long isoforms. Isoforms with truncated N-termini are monomeric. Binds ARRB2. Isoform 33 is part of a ternary complex containing PRKAR2A, PRKAR2B and AKAP9. Identified in a complex composed of RYR1, PDE4D, PKA, FKBP1A and protein phosphatase 1 (PP1). Interacts with PDE4DIP. Isoform 5 interacts (via N-terminal region) with SHANK2 (via proline-rich region); the interaction is increased in a PKA-dependent manner. Isoform 33, isoform 4, isoform 7, isoform 8 and isoform 9 but not isoform 32 and isoform 6 interact with SHANK2. Isoform 31 interacts weakly with SHANK2. It depends on Zn(2+) as a cofactor. Requires Mg(2+) as cofactor. The cofactor is Mn(2+). In terms of processing, isoform 1 and isoform 9 are rapidly activated by PKA through phosphorylation. Long isoforms that share a conserved PKA phosphorylation site in the N-terminus are also activated. Post-translationally, sumoylation of long isoforms by PIAS4 augments their activation by PKA phosphorylation and represses their inhibition by ERK phosphorylation. As to expression, expressed in epithelial cells. Isoform 33, isoform 4, isoform 5 and isoform 9 are expressed in brain. Isoform 33, isoform 5, isoform 8 and isoform 9 are expressed in heart (at protein level). Isoform 4 and isoform 6 are strongly expressed in cortex and cerebellum. Isoform 7 is strongly expressed in cortex and testis; weakly expressed in kidney, lung, spleen and cerebellum. Isoform 8 is strongly expressed in lung, heart and liver. Isoform 31, isoform 32, isoform 33, isoform 5 and isoform 9 are widely distributed.

Its subcellular location is the apical cell membrane. It localises to the cytoplasm. The protein localises to the membrane. It is found in the cytoskeleton. The protein resides in the microtubule organizing center. Its subcellular location is the centrosome. It catalyses the reaction 3',5'-cyclic AMP + H2O = AMP + H(+). It participates in purine metabolism; 3',5'-cyclic AMP degradation; AMP from 3',5'-cyclic AMP: step 1/1. With respect to regulation, activated by phosphatidic acid. Inhibited by rolipram. Its function is as follows. Hydrolyzes the second messenger cAMP, which is a key regulator of many important physiological processes. This Rattus norvegicus (Rat) protein is 3',5'-cyclic-AMP phosphodiesterase 4D (Pde4d).